The following is a 323-amino-acid chain: Aldo-keto reductase family 1 member C1 (323 aa).

NADP(+)-binding positions include 20–24 (GFGTY) and aspartate 50. Tyrosine 24 lines the substrate pocket. Tyrosine 55 (proton donor) is an active-site residue. Histidine 117 is a binding site for substrate. Residues 166–167 (SN), glutamine 190, and 216–222 (YSALGSH) contribute to the NADP(+) site. Substrate-binding residues include histidine 222 and tryptophan 227. Residue 270–280 (KSYNEQRIRQN) coordinates NADP(+).

The protein belongs to the aldo/keto reductase family. In terms of assembly, monomer.

The protein resides in the cytoplasm. It is found in the cytosol. It carries out the reaction a 3alpha-hydroxysteroid + NADP(+) = a 3-oxosteroid + NADPH + H(+). The catalysed reaction is a 3alpha-hydroxysteroid + NAD(+) = a 3-oxosteroid + NADH + H(+). It catalyses the reaction (17R,20S)-17,20-dihydroxypregn-4-en-3-one + NADP(+) = 17alpha-hydroxyprogesterone + NADPH + H(+). The enzyme catalyses (17R,20S)-17,20-dihydroxypregn-4-en-3-one + NAD(+) = 17alpha-hydroxyprogesterone + NADH + H(+). It carries out the reaction (20S)-hydroxypregn-4-en-3-one + NADP(+) = progesterone + NADPH + H(+). The catalysed reaction is (20S)-hydroxypregn-4-en-3-one + NAD(+) = progesterone + NADH + H(+). It catalyses the reaction (1R,2R)-1,2-dihydrobenzene-1,2-diol + NADP(+) = catechol + NADPH + H(+). The enzyme catalyses (S)-indan-1-ol + NAD(+) = indan-1-one + NADH + H(+). It carries out the reaction (S)-indan-1-ol + NADP(+) = indan-1-one + NADPH + H(+). The catalysed reaction is 5alpha-androstane-3alpha,17beta-diol + NADP(+) = 17beta-hydroxy-5alpha-androstan-3-one + NADPH + H(+). It catalyses the reaction 5alpha-androstane-3beta,17beta-diol + NADP(+) = 17beta-hydroxy-5alpha-androstan-3-one + NADPH + H(+). The enzyme catalyses 5alpha-androstane-3alpha,17beta-diol + NAD(+) = 17beta-hydroxy-5alpha-androstan-3-one + NADH + H(+). It carries out the reaction 17beta-hydroxy-5alpha-androstan-3-one + NADP(+) = 5alpha-androstan-3,17-dione + NADPH + H(+). The catalysed reaction is androsterone + NADP(+) = 5alpha-androstan-3,17-dione + NADPH + H(+). It catalyses the reaction androsterone + NADPH + H(+) = 5alpha-androstane-3alpha,17beta-diol + NADP(+). The enzyme catalyses 5alpha-androstane-3alpha,17beta-diol + NAD(+) = androsterone + NADH + H(+). It carries out the reaction 17beta-estradiol + NADP(+) = estrone + NADPH + H(+). The catalysed reaction is 17beta-estradiol + NAD(+) = estrone + NADH + H(+). It catalyses the reaction testosterone + NADP(+) = androst-4-ene-3,17-dione + NADPH + H(+). The enzyme catalyses 20alpha-hydroxy-5beta-pregnan-3-one + NADP(+) = 5beta-pregnan-3,20-dione + NADPH + H(+). It carries out the reaction 3beta-hydroxy-5beta-pregnane-20-one + NADP(+) = 5beta-pregnan-3,20-dione + NADPH + H(+). The catalysed reaction is 3beta-hydroxy-5beta-pregnane-20-one + NADPH + H(+) = 3beta,20alpha-dihydroxy-5beta-pregnane + NADP(+). It catalyses the reaction (3beta,5alpha,17beta)-3-hydroxyandrostan-17-yl sulfate + NADP(+) = 5alpha-dihydrotestosterone sulfate + NADPH + H(+). Its pathway is steroid metabolism. Its function is as follows. Cytosolic aldo-keto reductase that catalyzes the NADH and NADPH-dependent reduction of ketosteroids to hydroxysteroids. Most probably acts as a reductase in vivo since the oxidase activity measured in vitro is inhibited by physiological concentrations of NADPH. Displays a broad positional specificity acting on positions 3, 17 and 20 of steroids and regulates the metabolism of hormones like estrogens and androgens. May also reduce conjugated steroids such as 5alpha-dihydrotestosterone sulfate. Displays affinity for bile acids. This is Aldo-keto reductase family 1 member C1 (AKR1C1) from Pongo abelii (Sumatran orangutan).